We begin with the raw amino-acid sequence, 550 residues long: Glucose-6-phosphate isomerase 1 (550 aa).

E355 serves as the catalytic Proton donor. Catalysis depends on residues H386 and K512.

This sequence belongs to the GPI family.

It is found in the cytoplasm. The enzyme catalyses alpha-D-glucose 6-phosphate = beta-D-fructose 6-phosphate. It functions in the pathway carbohydrate biosynthesis; gluconeogenesis. Its pathway is carbohydrate degradation; glycolysis; D-glyceraldehyde 3-phosphate and glycerone phosphate from D-glucose: step 2/4. Functionally, catalyzes the reversible isomerization of glucose-6-phosphate to fructose-6-phosphate. This chain is Glucose-6-phosphate isomerase 1, found in Rhodococcus jostii (strain RHA1).